The sequence spans 320 residues: MIFSTLEHILTHISFSVVSIVITIHFLTLFLLVDEVVGLYDSSEKGMIVTFFCITGLLVTRWIYSGHFPLSDLYESLIFLSWGFSLIHMVSYLKFKKRKNNLSAITAPRAIFTQGFATSGLLTKMHQSAILAPALQSQWLMMHVSMMVLGYAALLCGSLLSVALLVITFRKAIKIIGENNNFSFSFGKIQYMNERSNVLLNTYFLSSKNYYRYQLTQQLDRWSYRIISLGFIFLTIGILSGAVWANEAWGSYWNWDPKETWAFITWTVFAIYFHTRTNTNLEGVNSALVASMGFLIIWICYFGVNLLGIGLHSYGSFTLN.

A run of 7 helical transmembrane segments spans residues 13–33 (ISFS…FLLV), 46–66 (GMIV…IYSG), 73–93 (LYES…VSYL), 147–167 (MVLG…LLVI), 226–246 (IISL…VWAN), 259–274 (ETWA…IYFH), and 289–309 (VASM…LLGI).

This sequence belongs to the CcmF/CycK/Ccl1/NrfE/CcsA family. May interact with Ccs1.

The protein localises to the plastid. Its subcellular location is the chloroplast thylakoid membrane. Functionally, required during biogenesis of c-type cytochromes (cytochrome c6 and cytochrome f) at the step of heme attachment. The polypeptide is Cytochrome c biogenesis protein CcsA (Gossypium barbadense (Sea Island cotton)).